We begin with the raw amino-acid sequence, 604 residues long: Serine/threonine-protein phosphatase 2B catalytic subunit A2 (604 aa).

The disordered stretch occupies residues 21–48; that stretch reads NKTERPQSSTTPIDSKASTVAAANSTAT. T31 is modified (phosphothreonine). Residues 35 to 48 show a composition bias toward low complexity; it reads SKASTVAAANSTAT. Fe cation contacts are provided by D144, H146, and D172. Residues D172 and N204 each coordinate Zn(2+). Residue H205 is the Proton donor of the active site. Zn(2+)-binding residues include H253 and H359. The segment at 470–497 is disordered; sequence KKLPQAGKSEATPQPATSASPKHASILD. Residues 480 to 489 show a composition bias toward polar residues; the sequence is ATPQPATSAS. Phosphoserine occurs at positions 489 and 520. The interval 501-523 is calmodulin-binding; sequence RRKALRNKILAVAKVSRMYSVLR.

It belongs to the PPP phosphatase family. PP-2B subfamily. Composed of two components (A and B), the A component is the catalytic subunit and the B component confers calcium sensitivity. Fe(3+) serves as cofactor. Requires Zn(2+) as cofactor.

It catalyses the reaction O-phospho-L-seryl-[protein] + H2O = L-seryl-[protein] + phosphate. The enzyme catalyses O-phospho-L-threonyl-[protein] + H2O = L-threonyl-[protein] + phosphate. Its function is as follows. Calcium-dependent, calmodulin-stimulated protein phosphatase. This subunit may have a role in the calmodulin activation of calcineurin. The protein is Serine/threonine-protein phosphatase 2B catalytic subunit A2 (CMP2) of Saccharomyces cerevisiae (strain ATCC 204508 / S288c) (Baker's yeast).